A 413-amino-acid chain; its full sequence is Alpha-1-antitrypsin-like protein GS55-LT (413 aa).

An N-terminal signal peptide occupies residues M1 to G21. Residues N65, N102, and N123 are each glycosylated (N-linked (GlcNAc...) asparagine). The segment at R368–R387 is RCL.

It belongs to the serpin family.

It is found in the secreted. Its function is as follows. Inhibitor of serine proteases. This is Alpha-1-antitrypsin-like protein GS55-LT from Ictidomys tridecemlineatus (Thirteen-lined ground squirrel).